Here is a 203-residue protein sequence, read N- to C-terminus: MKPIKIGVGGPVGAGKTMLVEKLTRYMSDDYSMAVVTNDIYTKEDAKFLMENGVLPSDRIIGVETGGCPHTAIREDASMNFAAVNELVQRHPDVQIVFVESGGDNLAATFSPELADFSIYIIDVAQGEKIPRKGGQGMIKSDLFVINKTDLAPYVGANLDIMASDTRKFRGNKPFVFTNLKKDEGLPDVISWIRKNVCLEGLT.

10–17 (GPVGAGKT) contacts GTP.

Belongs to the SIMIBI class G3E GTPase family. UreG subfamily. Homodimer. UreD, UreF and UreG form a complex that acts as a GTP-hydrolysis-dependent molecular chaperone, activating the urease apoprotein by helping to assemble the nickel containing metallocenter of UreC. The UreE protein probably delivers the nickel.

The protein resides in the cytoplasm. In terms of biological role, facilitates the functional incorporation of the urease nickel metallocenter. This process requires GTP hydrolysis, probably effectuated by UreG. The polypeptide is Urease accessory protein UreG (Lachnoclostridium phytofermentans (strain ATCC 700394 / DSM 18823 / ISDg) (Clostridium phytofermentans)).